A 196-amino-acid chain; its full sequence is Peptidyl-tRNA hydrolase (196 aa).

Residue Tyr18 participates in tRNA binding. Residue His23 is the Proton acceptor of the active site. 3 residues coordinate tRNA: Phe69, Asn71, and Asn117.

The protein belongs to the PTH family. Monomer.

It localises to the cytoplasm. The catalysed reaction is an N-acyl-L-alpha-aminoacyl-tRNA + H2O = an N-acyl-L-amino acid + a tRNA + H(+). Hydrolyzes ribosome-free peptidyl-tRNAs (with 1 or more amino acids incorporated), which drop off the ribosome during protein synthesis, or as a result of ribosome stalling. In terms of biological role, catalyzes the release of premature peptidyl moieties from peptidyl-tRNA molecules trapped in stalled 50S ribosomal subunits, and thus maintains levels of free tRNAs and 50S ribosomes. The polypeptide is Peptidyl-tRNA hydrolase (Marinobacter nauticus (strain ATCC 700491 / DSM 11845 / VT8) (Marinobacter aquaeolei)).